The sequence spans 141 residues: HTH-type transcriptional regulator MntR (141 aa).

The HTH dtxR-type domain occupies 1-63; the sequence is MPTPSMEDYI…YEKYRGLVLT (63 aa). Positions 8, 11, 77, 99, 102, and 103 each coordinate Mn(2+).

The protein belongs to the DtxR/MntR family. Homodimer.

It is found in the cytoplasm. Its activity is regulated as follows. DNA binding is strongly activated by Mn(2+). Functionally, central regulator of manganese homeostasis. The sequence is that of HTH-type transcriptional regulator MntR from Geobacillus thermodenitrificans (strain NG80-2).